The chain runs to 316 residues: Beta-ketoacyl-[acyl-carrier-protein] synthase III (316 aa).

Residues cysteine 112 and histidine 243 contribute to the active site. The interval 244 to 248 (QANIR) is ACP-binding. Residue asparagine 273 is part of the active site.

This sequence belongs to the thiolase-like superfamily. FabH family. In terms of assembly, homodimer.

Its subcellular location is the cytoplasm. The catalysed reaction is malonyl-[ACP] + acetyl-CoA + H(+) = 3-oxobutanoyl-[ACP] + CO2 + CoA. Its pathway is lipid metabolism; fatty acid biosynthesis. Its function is as follows. Catalyzes the condensation reaction of fatty acid synthesis by the addition to an acyl acceptor of two carbons from malonyl-ACP. Catalyzes the first condensation reaction which initiates fatty acid synthesis and may therefore play a role in governing the total rate of fatty acid production. Possesses both acetoacetyl-ACP synthase and acetyl transacylase activities. Its substrate specificity determines the biosynthesis of branched-chain and/or straight-chain of fatty acids. This is Beta-ketoacyl-[acyl-carrier-protein] synthase III from Haemophilus ducreyi (strain 35000HP / ATCC 700724).